We begin with the raw amino-acid sequence, 485 residues long: NADH-quinone oxidoreductase subunit N (485 aa).

Transmembrane regions (helical) follow at residues 8–28 (LIALLPLLIVGLTVVVVMLSI), 35–55 (FLNATLSVIGLNAALVSLWFV), 71–91 (GFAMLYTGLVLLASLATCTFA), 105–125 (FYLLVLIASLGGILLANANHL), 127–147 (ALFLGIELISLPLFGLIGYAF), 159–179 (YTILSAAASSFLLFGMALVYA), 203–223 (LLAGFGLMIVGLGFKLSLAPF), 235–255 (PAPVSTFLATASKIAIFGVVM), 271–291 (VVLGIIAFASIIFGNLMALSQ), 297–317 (LLGYSSISHLGYLLVALIALQ), 326–346 (VGVYLAGYLFSSLGAFGVVSL), 373–393 (AAVMTVMMLSLAGIPMTLGFI), 408–430 (WWLVAAVVVGSAIGLYYYLRVAV), and 455–475 (IVVLISALLVLVLGVWPQPLI).

Belongs to the complex I subunit 2 family. As to quaternary structure, NDH-1 is composed of 13 different subunits. Subunits NuoA, H, J, K, L, M, N constitute the membrane sector of the complex.

It is found in the cell inner membrane. It carries out the reaction a quinone + NADH + 5 H(+)(in) = a quinol + NAD(+) + 4 H(+)(out). NDH-1 shuttles electrons from NADH, via FMN and iron-sulfur (Fe-S) centers, to quinones in the respiratory chain. The immediate electron acceptor for the enzyme in this species is believed to be ubiquinone. Couples the redox reaction to proton translocation (for every two electrons transferred, four hydrogen ions are translocated across the cytoplasmic membrane), and thus conserves the redox energy in a proton gradient. The protein is NADH-quinone oxidoreductase subunit N of Salmonella paratyphi C (strain RKS4594).